The sequence spans 804 residues: Ral guanine nucleotide dissociation stimulator-like 1 (804 aa).

In terms of domain architecture, N-terminal Ras-GEF spans 101 to 231 (KIRSIRAGTL…RAQSLLEQLR (131 aa)). The Ras-GEF domain occupies 270-539 (EVDLVAEQLT…YVLSCEVEGL (270 aa)). 2 disordered regions span residues 564–611 (NDST…TPTH) and 640–676 (SASI…GFPP). 2 stretches are compositionally biased toward low complexity: residues 581–607 (PTGS…SDGM) and 640–649 (SASISLASPT). Polar residues predominate over residues 661-671 (ISLTPLMSPTS). Positions 684-771 (DACIIRVSLE…FDFLLRLRGS (88 aa)) constitute a Ras-associating domain.

In terms of biological role, probable guanine nucleotide exchange factor. This chain is Ral guanine nucleotide dissociation stimulator-like 1 (rgl1), found in Danio rerio (Zebrafish).